The sequence spans 426 residues: Serine--tRNA ligase (426 aa).

233-235 contacts L-serine; it reads TAE. 264–266 contributes to the ATP binding site; the sequence is RSE. L-serine is bound at residue Glu-287. 351–354 provides a ligand contact to ATP; sequence EISS. Residue Ser-387 participates in L-serine binding.

The protein belongs to the class-II aminoacyl-tRNA synthetase family. Type-1 seryl-tRNA synthetase subfamily. Homodimer. The tRNA molecule binds across the dimer.

It localises to the cytoplasm. The catalysed reaction is tRNA(Ser) + L-serine + ATP = L-seryl-tRNA(Ser) + AMP + diphosphate + H(+). The enzyme catalyses tRNA(Sec) + L-serine + ATP = L-seryl-tRNA(Sec) + AMP + diphosphate + H(+). The protein operates within aminoacyl-tRNA biosynthesis; selenocysteinyl-tRNA(Sec) biosynthesis; L-seryl-tRNA(Sec) from L-serine and tRNA(Sec): step 1/1. Its function is as follows. Catalyzes the attachment of serine to tRNA(Ser). Is also able to aminoacylate tRNA(Sec) with serine, to form the misacylated tRNA L-seryl-tRNA(Sec), which will be further converted into selenocysteinyl-tRNA(Sec). The chain is Serine--tRNA ligase from Francisella philomiragia subsp. philomiragia (strain ATCC 25017 / CCUG 19701 / FSC 153 / O#319-036).